Consider the following 76-residue polypeptide: MATWLAILLIVAALIIGLVGGFFLARKYMMDYLKKNPPINEEMLRMMMMQMGQKPSQKKINQMMTMMNKNMDQKMK.

The chain crosses the membrane as a helical span at residues 4–24; sequence WLAILLIVAALIIGLVGGFFL.

The protein belongs to the UPF0154 family.

Its subcellular location is the cell membrane. This chain is UPF0154 protein Sca_0984, found in Staphylococcus carnosus (strain TM300).